Consider the following 1887-residue polypeptide: Nuclear pore membrane glycoprotein 210 (1887 aa).

The first 26 residues, 1–26 (MAARGRGLLLLTLSVLLAAGPSAAAA), serve as a signal peptide directing secretion. Residues 27–1808 (KLNIPKVLLP…LFQHFLDSYQ (1782 aa)) lie on the Perinuclear space side of the membrane. Asparagine 44, asparagine 337, asparagine 405, asparagine 484, asparagine 681, asparagine 801, asparagine 926, asparagine 1039, asparagine 1116, asparagine 1135, asparagine 1362, and asparagine 1441 each carry an N-linked (GlcNAc...) asparagine glycan. The BIG2 domain occupies 1078-1151 (FPPFRLMPRK…VQAVDAETGK (74 aa)). A helical membrane pass occupies residues 1809–1829 (VMFFTLFALLAGTAVMIIAYH). At 1830-1887 (TVCTPRDLAVPAALTPRASPGHSPHYFAASSPTSPNALPPARKASPPSGLWSPAYASH) the chain is on the cytoplasmic side. Phosphothreonine is present on threonine 1844. The tract at residues 1853–1887 (PHYFAASSPTSPNALPPARKASPPSGLWSPAYASH) is disordered. A phosphoserine mark is found at serine 1874, serine 1877, serine 1881, and serine 1886.

This sequence belongs to the NUP210 family. Forms dimers and possibly higher-order oligomers. In terms of processing, N-glycosylated, but not all potential glycosylation sites may be used. Contains high-mannose type oligosaccharides. Phosphorylated at Ser-1881 in mitosis specifically; not phosphorylated in interphase. Ubiquitous expression, with highest levels in lung, liver, pancreas, testis, and ovary, intermediate levels in brain, kidney, and spleen, and lowest levels in heart and skeletal muscle.

The protein localises to the nucleus. The protein resides in the nuclear pore complex. It localises to the nucleus membrane. It is found in the endoplasmic reticulum membrane. In terms of biological role, nucleoporin essential for nuclear pore assembly and fusion, nuclear pore spacing, as well as structural integrity. This Homo sapiens (Human) protein is Nuclear pore membrane glycoprotein 210 (NUP210).